Here is a 339-residue protein sequence, read N- to C-terminus: UDP-N-acetylglucosamine/UDP-N-acetylgalactosamine transporter nstp-4 (339 aa).

Transmembrane regions (helical) follow at residues 44–64, 94–114, 148–168, 186–206, 224–244, 255–275, 281–301, and 305–325; these read LSSTAVVCAEIIKLITCFFVI, LKVAVPAIMYVIQNNLLFFAL, YNWMALILLTAGVALVQYPSG, ILGLGAVLAACFSSGFAGVYF, LAFFSVFGALLVCWLYDWQAI, GVIWIVVLLQAYGGLVIALVV, ILKGFAVSLSIILSSFTSWLV, and LTITTTFAIGATVVIFATFLY.

The protein belongs to the nucleotide-sugar transporter family. SLC35A subfamily. In terms of tissue distribution, widely expressed, including in pharynx and pharyngeal gland cells, seam cells, spermatheca, stomatointestinal muscle, vulva, and body wall muscle.

It localises to the golgi apparatus membrane. In terms of biological role, uridine diphosphate-N-acetylglucosamine (UDP-GlcNAc) transporter in the Golgi apparatus. UDP-N-acetylgalactosamine (UDP-GalNAc) transporter in the Golgi apparatus. Apparently transports UDP-GlcNAc and UDP-GalNAc simultaneously, and independently, by an unknown mechanism. Functions redundantly with nucleotide sugar transporter srf-3. May be involved in gonadal development. The protein is UDP-N-acetylglucosamine/UDP-N-acetylgalactosamine transporter nstp-4 of Caenorhabditis elegans.